A 37-amino-acid polypeptide reads, in one-letter code: Large ribosomal subunit protein bL36 (37 aa).

This sequence belongs to the bacterial ribosomal protein bL36 family.

The protein is Large ribosomal subunit protein bL36 of Trichodesmium erythraeum (strain IMS101).